The chain runs to 150 residues: Large ribosomal subunit protein bL9 (150 aa).

Belongs to the bacterial ribosomal protein bL9 family.

Functionally, binds to the 23S rRNA. The chain is Large ribosomal subunit protein bL9 from Acidovorax ebreus (strain TPSY) (Diaphorobacter sp. (strain TPSY)).